The following is a 353-amino-acid chain: Holliday junction branch migration complex subunit RuvB (353 aa).

Residues 4–186 (ADRLIAATHS…FGIVQRLEFY (183 aa)) are large ATPase domain (RuvB-L). Residues isoleucine 25, arginine 26, glycine 67, lysine 70, threonine 71, threonine 72, 133–135 (EDF), arginine 176, tyrosine 186, and arginine 223 contribute to the ATP site. A Mg(2+)-binding site is contributed by threonine 71. The tract at residues 187-257 (STADLATIVS…VADLALNLLD (71 aa)) is small ATPAse domain (RuvB-S). Residues 260–353 (EHGFDHQDRR…VDEFLDAVDD (94 aa)) form a head domain (RuvB-H) region. 3 residues coordinate DNA: arginine 296, arginine 315, and arginine 320.

The protein belongs to the RuvB family. Homohexamer. Forms an RuvA(8)-RuvB(12)-Holliday junction (HJ) complex. HJ DNA is sandwiched between 2 RuvA tetramers; dsDNA enters through RuvA and exits via RuvB. An RuvB hexamer assembles on each DNA strand where it exits the tetramer. Each RuvB hexamer is contacted by two RuvA subunits (via domain III) on 2 adjacent RuvB subunits; this complex drives branch migration. In the full resolvosome a probable DNA-RuvA(4)-RuvB(12)-RuvC(2) complex forms which resolves the HJ.

It is found in the cytoplasm. It carries out the reaction ATP + H2O = ADP + phosphate + H(+). Functionally, the RuvA-RuvB-RuvC complex processes Holliday junction (HJ) DNA during genetic recombination and DNA repair, while the RuvA-RuvB complex plays an important role in the rescue of blocked DNA replication forks via replication fork reversal (RFR). RuvA specifically binds to HJ cruciform DNA, conferring on it an open structure. The RuvB hexamer acts as an ATP-dependent pump, pulling dsDNA into and through the RuvAB complex. RuvB forms 2 homohexamers on either side of HJ DNA bound by 1 or 2 RuvA tetramers; 4 subunits per hexamer contact DNA at a time. Coordinated motions by a converter formed by DNA-disengaged RuvB subunits stimulates ATP hydrolysis and nucleotide exchange. Immobilization of the converter enables RuvB to convert the ATP-contained energy into a lever motion, pulling 2 nucleotides of DNA out of the RuvA tetramer per ATP hydrolyzed, thus driving DNA branch migration. The RuvB motors rotate together with the DNA substrate, which together with the progressing nucleotide cycle form the mechanistic basis for DNA recombination by continuous HJ branch migration. Branch migration allows RuvC to scan DNA until it finds its consensus sequence, where it cleaves and resolves cruciform DNA. The protein is Holliday junction branch migration complex subunit RuvB of Pseudomonas fluorescens (strain Pf0-1).